Consider the following 56-residue polypeptide: uncharacterized protein (56 aa).

This is an uncharacterized protein from Acidianus convivator (ABV).